Here is a 126-residue protein sequence, read N- to C-terminus: Aspartate 1-decarboxylase (126 aa).

Residue serine 25 is the Schiff-base intermediate with substrate; via pyruvic acid of the active site. The residue at position 25 (serine 25) is a Pyruvic acid (Ser). Residue threonine 57 participates in substrate binding. Catalysis depends on tyrosine 58, which acts as the Proton donor. 73–75 lines the substrate pocket; that stretch reads GGA.

This sequence belongs to the PanD family. In terms of assembly, heterooctamer of four alpha and four beta subunits. It depends on pyruvate as a cofactor. Post-translationally, is synthesized initially as an inactive proenzyme, which is activated by self-cleavage at a specific serine bond to produce a beta-subunit with a hydroxyl group at its C-terminus and an alpha-subunit with a pyruvoyl group at its N-terminus.

It is found in the cytoplasm. The catalysed reaction is L-aspartate + H(+) = beta-alanine + CO2. It functions in the pathway cofactor biosynthesis; (R)-pantothenate biosynthesis; beta-alanine from L-aspartate: step 1/1. Its function is as follows. Catalyzes the pyruvoyl-dependent decarboxylation of aspartate to produce beta-alanine. This chain is Aspartate 1-decarboxylase, found in Xanthomonas campestris pv. campestris (strain ATCC 33913 / DSM 3586 / NCPPB 528 / LMG 568 / P 25).